Reading from the N-terminus, the 403-residue chain is Betaine--homocysteine S-methyltransferase 1 (403 aa).

The region spanning Lys8–Leu311 is the Hcy-binding domain. Zn(2+)-binding residues include Cys214, Cys296, and Cys297.

In terms of assembly, homotetramer. Requires Zn(2+) as cofactor.

It localises to the cytoplasm. It carries out the reaction L-homocysteine + glycine betaine = N,N-dimethylglycine + L-methionine. Its pathway is amine and polyamine degradation; betaine degradation; sarcosine from betaine: step 1/2. It functions in the pathway amino-acid biosynthesis; L-methionine biosynthesis via de novo pathway; L-methionine from L-homocysteine (BhmT route): step 1/1. Functionally, involved in the regulation of homocysteine metabolism. Converts betaine and homocysteine to dimethylglycine and methionine, respectively. This reaction is also required for the irreversible oxidation of choline. The sequence is that of Betaine--homocysteine S-methyltransferase 1 (bhmt) from Xenopus tropicalis (Western clawed frog).